The sequence spans 449 residues: Exodeoxyribonuclease 7 large subunit (449 aa).

This sequence belongs to the XseA family. Heterooligomer composed of large and small subunits.

It is found in the cytoplasm. It carries out the reaction Exonucleolytic cleavage in either 5'- to 3'- or 3'- to 5'-direction to yield nucleoside 5'-phosphates.. Functionally, bidirectionally degrades single-stranded DNA into large acid-insoluble oligonucleotides, which are then degraded further into small acid-soluble oligonucleotides. The protein is Exodeoxyribonuclease 7 large subunit of Aliivibrio fischeri (strain MJ11) (Vibrio fischeri).